The sequence spans 344 residues: MSRIVSGEAQPFEPADRALRPQTLSEFVGQEQAKANLSVFIDAARGRGEALDHVLLFGPPGLGKTTLAQILARELGVNFRATSGPVLAKAGDLAAILTNLEPRDVLFIDEIHRLAANVEEILYPAMEDHVLDLVIGEGPSARSVRIDLAPFTLVAATTRAGLLATPLRDRFGIPVRLEFYTHDELARVLLGAAAKMGAPLDPSGAREIAARARGTPRVAGRLLRRVRDFAAADGAEVIDRKAAAAALARLDVDEVGLDALDRRYLRALIENYAGGPAGVETLAYAIAEARDAVEDVIEPFLLQQGFIQRTPRGRMACAKAYEHLGLQAPRNLGGAAPPADLFDK.

Residues 1–180 form a large ATPase domain (RuvB-L) region; that stretch reads MSRIVSGEAQ…FGIPVRLEFY (180 aa). Residues leucine 19, arginine 20, glycine 61, lysine 64, threonine 65, threonine 66, arginine 170, tyrosine 180, and arginine 217 each coordinate ATP. Mg(2+) is bound at residue threonine 65. The tract at residues 181–251 is small ATPAse domain (RuvB-S); it reads THDELARVLL…AAAAALARLD (71 aa). The tract at residues 254–344 is head domain (RuvB-H); it reads EVGLDALDRR…AAPPADLFDK (91 aa). Residues arginine 290, arginine 309, and arginine 314 each contribute to the DNA site.

The protein belongs to the RuvB family. As to quaternary structure, homohexamer. Forms an RuvA(8)-RuvB(12)-Holliday junction (HJ) complex. HJ DNA is sandwiched between 2 RuvA tetramers; dsDNA enters through RuvA and exits via RuvB. An RuvB hexamer assembles on each DNA strand where it exits the tetramer. Each RuvB hexamer is contacted by two RuvA subunits (via domain III) on 2 adjacent RuvB subunits; this complex drives branch migration. In the full resolvosome a probable DNA-RuvA(4)-RuvB(12)-RuvC(2) complex forms which resolves the HJ.

It localises to the cytoplasm. The catalysed reaction is ATP + H2O = ADP + phosphate + H(+). Its function is as follows. The RuvA-RuvB-RuvC complex processes Holliday junction (HJ) DNA during genetic recombination and DNA repair, while the RuvA-RuvB complex plays an important role in the rescue of blocked DNA replication forks via replication fork reversal (RFR). RuvA specifically binds to HJ cruciform DNA, conferring on it an open structure. The RuvB hexamer acts as an ATP-dependent pump, pulling dsDNA into and through the RuvAB complex. RuvB forms 2 homohexamers on either side of HJ DNA bound by 1 or 2 RuvA tetramers; 4 subunits per hexamer contact DNA at a time. Coordinated motions by a converter formed by DNA-disengaged RuvB subunits stimulates ATP hydrolysis and nucleotide exchange. Immobilization of the converter enables RuvB to convert the ATP-contained energy into a lever motion, pulling 2 nucleotides of DNA out of the RuvA tetramer per ATP hydrolyzed, thus driving DNA branch migration. The RuvB motors rotate together with the DNA substrate, which together with the progressing nucleotide cycle form the mechanistic basis for DNA recombination by continuous HJ branch migration. Branch migration allows RuvC to scan DNA until it finds its consensus sequence, where it cleaves and resolves cruciform DNA. This is Holliday junction branch migration complex subunit RuvB from Phenylobacterium zucineum (strain HLK1).